A 1500-amino-acid polypeptide reads, in one-letter code: Carbamoyl-phosphate synthase [ammonia], mitochondrial (1500 aa).

Residues 1-38 (MTRILTACKVVKTLKSGFGFANVTTKRQWDFSRPGIRL) constitute a mitochondrion transit peptide. The interval 39-218 (LSVKAKTAHI…VKVFGKGNPT (180 aa)) is anthranilate phosphoribosyltransferase homolog. N6-acetyllysine; alternate is present on residues K44, K55, K57, and K119. K44, K55, K57, and K119 each carry N6-succinyllysine; alternate. K55 bears the N6-glutaryllysine; alternate mark. S148 carries the phosphoserine modification. N6-acetyllysine; alternate is present on residues K157 and K171. K157 is modified (N6-succinyllysine; alternate). K171 is modified (N6-glutaryllysine; alternate). K176 carries the N6-glutaryllysine modification. Residue K182 is modified to N6-acetyllysine. S189 carries the post-translational modification Phosphoserine. Position 197 is an N6-acetyllysine (K197). An N6-acetyllysine; alternate mark is found at K207, K210, K214, K219, and K228. The residue at position 207 (K207) is an N6-succinyllysine; alternate. Residues K207, K210, K214, K219, and K228 each carry the N6-glutaryllysine; alternate modification. K214 is subject to N6-succinyllysine; alternate. The region spanning 219-404 (KVVAVDCGIK…FSLIKKGKGT (186 aa)) is the Glutamine amidotransferase type-1 domain. Position 237 is an N6-glutaryllysine (K237). Residue K279 is modified to N6-acetyllysine. N6-acetyllysine; alternate occurs at positions 280, 287, 307, and 310. Position 280 is an N6-glutaryllysine; alternate (K280). Residues K287 and K307 each carry the N6-succinyllysine; alternate modification. 2 positions are modified to N6-glutaryllysine; alternate: K307 and K310. An N6-succinyllysine modification is found at K400. Residues K402 and K412 each carry the N6-succinyllysine; alternate modification. 4 positions are modified to N6-glutaryllysine; alternate: K402, K412, K453, and K458. N6-acetyllysine; alternate is present on residues K412, K453, K458, K522, K527, and K532. An N6-succinyllysine; alternate mark is found at K458, K522, and K527. N6-glutaryllysine; alternate occurs at positions 527 and 532. S537 carries the phosphoserine; alternate modification. O-linked (GlcNAc) serine; alternate glycosylation is present at S537. S540 carries the post-translational modification Phosphoserine. Residues 551 to 743 (SDKLNEINEK…LAFIAAKIAL (193 aa)) form the ATP-grasp 1 domain. 2 positions are modified to N6-acetyllysine; alternate: K553 and K560. N6-succinyllysine; alternate occurs at positions 553 and 560. The residue at position 553 (K553) is an N6-glutaryllysine; alternate. S569 is subject to Phosphoserine. N6-acetyllysine; alternate is present on residues K575, K603, and K612. An N6-succinyllysine; alternate mark is found at K575, K603, and K612. K630 is subject to N6-acetyllysine. K728 is modified (N6-glutaryllysine). Residues K751, K757, K772, K793, K811, K831, K840, K841, K856, K875, K889, and K892 each carry the N6-acetyllysine; alternate modification. Residues K751 and K757 each carry the N6-succinyllysine; alternate modification. Residues K757, K772, K793, and K811 each carry the N6-glutaryllysine; alternate modification. K793 bears the N6-succinyllysine; alternate mark. Residues K831 and K840 each carry the N6-succinyllysine; alternate modification. K841, K856, K875, K889, and K892 each carry N6-glutaryllysine; alternate. N6-succinyllysine; alternate is present on residues K875, K889, and K892. Phosphoserine is present on residues S896 and S898. Residues K908, K915, and K919 each carry the N6-acetyllysine; alternate modification. An N6-glutaryllysine; alternate mark is found at K908, K915, and K919. N6-succinyllysine; alternate is present on residues K915 and K919. K935 is modified (N6-acetyllysine). S1036 carries the post-translational modification Phosphoserine. K1074 carries the post-translational modification N6-acetyllysine; alternate. The residue at position 1074 (K1074) is an N6-succinyllysine; alternate. The residue at position 1074 (K1074) is an N6-glutaryllysine; alternate. 3 positions are modified to phosphoserine: S1079, S1090, and S1093. Positions 1093 to 1284 (SAVLDELKVA…FIDVATKVMI (192 aa)) constitute an ATP-grasp 2 domain. Position 1100 is an N6-acetyllysine; alternate (K1100). An N6-succinyllysine; alternate modification is found at K1100. K1149 carries the post-translational modification N6-succinyllysine. K1168 and K1183 each carry N6-acetyllysine; alternate. Residues K1168 and K1183 each carry the N6-succinyllysine; alternate modification. N6-glutaryllysine; alternate is present on residues K1168 and K1183. Phosphoserine is present on S1203. K1222 bears the N6-acetyllysine mark. K1224 bears the N6-glutaryllysine mark. K1232, K1269, and K1291 each carry N6-acetyllysine; alternate. Residues K1232, K1269, and K1291 each carry the N6-succinyllysine; alternate modification. The O-linked (GlcNAc) serine glycan is linked to S1331. O-linked (GlcNAc) threonine glycosylation is present at T1332. An MGS-like domain is found at 1355–1500 (FKIPQKGILI…YRQYSAGKAA (146 aa)). K1356 is subject to N6-acetyllysine; alternate. N6-succinyllysine; alternate occurs at positions 1356 and 1360. K1356 and K1360 each carry N6-glutaryllysine; alternate. The N-acetyl-L-glutamate site is built by T1391, T1394, and W1410. Phosphoserine occurs at positions 1419 and 1431. The N-acetyl-L-glutamate site is built by N1437 and N1440. N6-acetyllysine; alternate is present on K1444. K1444 is modified (N6-succinyllysine; alternate). N1449 is a binding site for N-acetyl-L-glutamate. 3 positions are modified to N6-acetyllysine; alternate: K1471, K1479, and K1486. 3 positions are modified to N6-succinyllysine; alternate: K1471, K1479, and K1486. K1479 and K1486 each carry N6-glutaryllysine; alternate.

In terms of assembly, can form homooligomers (monomers as predominant form and dimers). (Microbial infection) Interacts with P.berghei (ANKA strain) phospholipid scramblase PLSCR; the interaction is involved in the interaction between parasite sporozoites and host hepatocytes. Post-translationally, undergoes proteolytic cleavage in the C-terminal region corresponding to the loss of approximately 12 AA residues from the C-terminus. Acetylation of Lys-287, Lys-603, Lys-841 and Lys-1291 is observed in liver mitochondria from fasted mice but not from fed mice. In terms of processing, succinylated at Lys-44, Lys-287 and Lys-1291. Desuccinylated at Lys-1291 by SIRT5, leading to activation. Post-translationally, glutarylated. Glutarylation levels increase during fasting. Deglutarylated by SIRT5 at Lys-55, Lys-219, Lys-412, Lys-889, Lys-892, Lys-915, Lys-1360 and Lys-1486, leading to activation. In terms of tissue distribution, expressed in hepatocytes (at protein level).

Its subcellular location is the mitochondrion. It is found in the nucleus. It localises to the nucleolus. The protein resides in the cell membrane. It carries out the reaction hydrogencarbonate + NH4(+) + 2 ATP = carbamoyl phosphate + 2 ADP + phosphate + 2 H(+). Its activity is regulated as follows. Requires N-acetyl-L-glutamate (NAG) as an allosteric activator. Its function is as follows. Involved in the urea cycle of ureotelic animals where the enzyme plays an important role in removing excess ammonia from the cell. The protein is Carbamoyl-phosphate synthase [ammonia], mitochondrial (Cps1) of Mus musculus (Mouse).